We begin with the raw amino-acid sequence, 228 residues long: MSIVFALSAISKSFGKNNQVNIIINANLQIKKGEIVALIGPSGSGKSTLLHIAGLLDTPSSGSVFINNIECSATTSDREKTYLRRNFLGFVYQFHHLLQEFSVLENVMLPQIIIGKSNEVARKNAIELLSLVKLQDKLLMSISQLSGGERQRVAIARSLINYPSIILADEPTGSLDNDTALEVFSLLHKYAKEKNISVFLATHNHILAKKADKIVQINSGTLQNYTDY.

An ABC transporter domain is found at 5-228 (FALSAISKSF…SGTLQNYTDY (224 aa)). 40–47 (GPSGSGKS) serves as a coordination point for ATP.

Belongs to the ABC transporter superfamily. Lipoprotein translocase (TC 3.A.1.125) family. In terms of assembly, the complex is composed of two ATP-binding proteins (LolD) and two transmembrane proteins (LolC and LolE).

Its subcellular location is the cell inner membrane. In terms of biological role, part of the ABC transporter complex LolCDE involved in the translocation of mature outer membrane-directed lipoproteins, from the inner membrane to the periplasmic chaperone, LolA. Responsible for the formation of the LolA-lipoprotein complex in an ATP-dependent manner. The protein is Lipoprotein-releasing system ATP-binding protein LolD of Ehrlichia ruminantium (strain Gardel).